The following is a 97-amino-acid chain: HssA/B-like protein 47 (97 aa).

The interval 1–33 (MTLFSSISSISNPMTSSKSSIASFGSGTSMSSN) is disordered.

It belongs to the hssA/B family.

The protein is HssA/B-like protein 47 (hssl47) of Dictyostelium discoideum (Social amoeba).